The sequence spans 122 residues: Urocortin (122 aa).

The N-terminal stretch at 1 to 25 (MRQRGRATLLVALLLLVQLRPESSQ) is a signal peptide. Residues 26–80 (WSPAAAAANVVQDPNLRWNPGVRNQGGGVRALLLLLAERFPRRAGSEPAGERQRR) constitute a propeptide that is removed on maturation. V120 carries the valine amide modification.

Belongs to the sauvagine/corticotropin-releasing factor/urotensin I family. In terms of assembly, interacts with CRHR1 and CRHR2 (via their N-terminal extracellular domain).

The protein localises to the secreted. Its function is as follows. Acts in vitro to stimulate the secretion of adrenocorticotropic hormone (ACTH). Binds with high affinity to CRF receptor types 1, 2-alpha, and 2-beta. Plays a role in the establishment of normal hearing thresholds. Reduces food intake and regulates ghrelin levels in gastric body and plasma. The polypeptide is Urocortin (Ucn) (Rattus norvegicus (Rat)).